Here is a 510-residue protein sequence, read N- to C-terminus: NEDD8-activating enzyme E1 regulatory subunit (510 aa).

Ala-2 carries the post-translational modification N-acetylalanine. Residues Lys-6 and Lys-317 each carry the N6-acetyllysine modification. Residues 307–320 (DMIADSGKYIKLQN) are interaction with UBA3.

It belongs to the ubiquitin-activating E1 family. ULA1 subfamily. In terms of assembly, heterodimer of UBA3 and NAE1. The complex binds NEDD8 and UBE2M. Binds APP and TP53BP2. Ubiquitinated by TRIP12, leading to its degradation by the proteasome.

It is found in the cell membrane. It participates in protein modification; protein neddylation. Binding of TP53BP2 to the regulatory subunit NAE1 decreases neddylation activity. In terms of biological role, regulatory subunit of the dimeric UBA3-NAE1 E1 enzyme. E1 activates NEDD8 by first adenylating its C-terminal glycine residue with ATP, thereafter linking this residue to the side chain of the catalytic cysteine, yielding a NEDD8-UBA3 thioester and free AMP. E1 finally transfers NEDD8 to the catalytic cysteine of UBE2M. Necessary for cell cycle progression through the S-M checkpoint. Overexpression of NAE1 causes apoptosis through deregulation of NEDD8 conjugation. The covalent attachment of NEDD8 to target proteins is known as 'neddylation' and the process is involved in the regulation of cell growth, viability and development. The chain is NEDD8-activating enzyme E1 regulatory subunit (NAE1) from Macaca fascicularis (Crab-eating macaque).